We begin with the raw amino-acid sequence, 362 residues long: Ferredoxin--NADP reductase, leaf-type isozyme, chloroplastic (362 aa).

Positions methionine 1 to serine 20 are disordered. The N-terminal 62 residues, methionine 1 to alanine 62, are a transit peptide targeting the chloroplast. The segment covering serine 10–serine 20 has biased composition (low complexity). The FAD-binding FR-type domain maps to lysine 83–methionine 205. FAD contacts are provided by residues arginine 141–serine 144, cysteine 162–lysine 164, tyrosine 168, valine 179–serine 181, and threonine 220. Residues serine 144 and lysine 164 each contribute to the NADP(+) site. NADP(+) contacts are provided by residues threonine 220, valine 252–proline 253, serine 282–arginine 283, lysine 292, glycine 321–leucine 322, and glutamate 360.

It belongs to the ferredoxin--NADP reductase type 1 family. Requires FAD as cofactor.

The protein localises to the plastid. Its subcellular location is the chloroplast stroma. It is found in the chloroplast thylakoid membrane. The catalysed reaction is 2 reduced [2Fe-2S]-[ferredoxin] + NADP(+) + H(+) = 2 oxidized [2Fe-2S]-[ferredoxin] + NADPH. It participates in energy metabolism; photosynthesis. Its function is as follows. May play a key role in regulating the relative amounts of cyclic and non-cyclic electron flow to meet the demands of the plant for ATP and reducing power. The sequence is that of Ferredoxin--NADP reductase, leaf-type isozyme, chloroplastic (PETH) from Nicotiana tabacum (Common tobacco).